A 352-amino-acid chain; its full sequence is N-acetyl-gamma-glutamyl-phosphate reductase (352 aa).

The active site involves Cys158.

Belongs to the NAGSA dehydrogenase family. Type 1 subfamily.

The protein resides in the cytoplasm. It carries out the reaction N-acetyl-L-glutamate 5-semialdehyde + phosphate + NADP(+) = N-acetyl-L-glutamyl 5-phosphate + NADPH + H(+). It participates in amino-acid biosynthesis; L-arginine biosynthesis; N(2)-acetyl-L-ornithine from L-glutamate: step 3/4. In terms of biological role, catalyzes the NADPH-dependent reduction of N-acetyl-5-glutamyl phosphate to yield N-acetyl-L-glutamate 5-semialdehyde. This Mycobacterium bovis (strain BCG / Tokyo 172 / ATCC 35737 / TMC 1019) protein is N-acetyl-gamma-glutamyl-phosphate reductase.